We begin with the raw amino-acid sequence, 161 residues long: Ureidoglycolate lyase (161 aa).

The protein belongs to the ureidoglycolate lyase family. Homodimer. Ni(2+) serves as cofactor.

The catalysed reaction is (S)-ureidoglycolate = urea + glyoxylate. Its pathway is nitrogen metabolism; (S)-allantoin degradation. Functionally, catalyzes the catabolism of the allantoin degradation intermediate (S)-ureidoglycolate, generating urea and glyoxylate. Involved in the utilization of allantoin as nitrogen source. The chain is Ureidoglycolate lyase from Rhodobacter capsulatus (strain ATCC BAA-309 / NBRC 16581 / SB1003).